The primary structure comprises 228 residues: Mediator of RNA polymerase II transcription subunit 7-B (228 aa).

Belongs to the Mediator complex subunit 7 family. In terms of assembly, component of the Mediator complex.

The protein resides in the nucleus. Component of the Mediator complex, a coactivator involved in the regulated transcription of nearly all RNA polymerase II-dependent genes. Mediator functions as a bridge to convey information from gene-specific regulatory proteins to the basal RNA polymerase II transcription machinery. Mediator is recruited to promoters by direct interactions with regulatory proteins and serves as a scaffold for the assembly of a functional preinitiation complex with RNA polymerase II and the general transcription factors. This Xenopus laevis (African clawed frog) protein is Mediator of RNA polymerase II transcription subunit 7-B (med7-b).